Here is a 665-residue protein sequence, read N- to C-terminus: Genetic interactor of prohibitins 3, mitochondrial (665 aa).

A mitochondrion-targeting transit peptide spans 1-17 (MISRLIHSKHYLTLFRQ). A CP-type G domain is found at 185–380 (EQVLQNLPRA…VYDVPGFSSS (196 aa)).

It belongs to the TRAFAC class YlqF/YawG GTPase family. GEP3 subfamily.

It localises to the mitochondrion. Functionally, may be involved in the mitochondrial lipid metabolism. The protein is Genetic interactor of prohibitins 3, mitochondrial (GEP3) of Lodderomyces elongisporus (strain ATCC 11503 / CBS 2605 / JCM 1781 / NBRC 1676 / NRRL YB-4239) (Yeast).